Reading from the N-terminus, the 336-residue chain is Flagellar filament 41 kDa core protein (336 aa).

The tract at residues 208 to 236 (AAPVQEGVQQEGAQQPAPATAPSQGGVNS) is disordered. Residues 210–233 (PVQEGVQQEGAQQPAPATAPSQGG) show a composition bias toward low complexity.

It belongs to the bacterial flagellin family. In terms of assembly, the flagellum consists of an outer layer composed of repeating units of FlaA around a core that contains several antigenically related polypeptides.

Its subcellular location is the periplasmic flagellum. It localises to the periplasm. Functionally, component of the core of the flagella. The chain is Flagellar filament 41 kDa core protein (fla) from Borreliella burgdorferi (strain ATCC 35210 / DSM 4680 / CIP 102532 / B31) (Borrelia burgdorferi).